We begin with the raw amino-acid sequence, 130 residues long: Small ribosomal subunit protein uS8 (130 aa).

The protein belongs to the universal ribosomal protein uS8 family. As to quaternary structure, part of the 30S ribosomal subunit. Contacts proteins S5 and S12.

Functionally, one of the primary rRNA binding proteins, it binds directly to 16S rRNA central domain where it helps coordinate assembly of the platform of the 30S subunit. This is Small ribosomal subunit protein uS8 from Neisseria meningitidis serogroup C (strain 053442).